Here is a 264-residue protein sequence, read N- to C-terminus: 3-methyl-2-oxobutanoate hydroxymethyltransferase (264 aa).

Aspartate 45 and aspartate 84 together coordinate Mg(2+). 3-methyl-2-oxobutanoate-binding positions include aspartate 45–serine 46, aspartate 84, and lysine 112. Glutamate 114 lines the Mg(2+) pocket. Residue glutamate 181 is the Proton acceptor of the active site.

The protein belongs to the PanB family. In terms of assembly, homodecamer; pentamer of dimers. Mg(2+) is required as a cofactor.

The protein resides in the cytoplasm. The catalysed reaction is 3-methyl-2-oxobutanoate + (6R)-5,10-methylene-5,6,7,8-tetrahydrofolate + H2O = 2-dehydropantoate + (6S)-5,6,7,8-tetrahydrofolate. It functions in the pathway cofactor biosynthesis; (R)-pantothenate biosynthesis; (R)-pantoate from 3-methyl-2-oxobutanoate: step 1/2. Catalyzes the reversible reaction in which hydroxymethyl group from 5,10-methylenetetrahydrofolate is transferred onto alpha-ketoisovalerate to form ketopantoate. This Vibrio vulnificus (strain YJ016) protein is 3-methyl-2-oxobutanoate hydroxymethyltransferase.